The primary structure comprises 146 residues: Hemoglobin cathodic subunit beta (146 aa).

Residues 2 to 146 (QWSSSERSVI…VVSGLSKQYF (145 aa)) enclose the Globin domain. His-63 contributes to the heme b binding site.

In terms of assembly, heterotetramer of two alpha and two beta chains. As to expression, red blood cells.

Involved in oxygen transport from the gills to various peripheral tissues. The protein is Hemoglobin cathodic subunit beta of Ophisurus serpens (Serpent eel).